Reading from the N-terminus, the 1221-residue chain is Deubiquitinating protein VCPIP1 (1221 aa).

Residues 1–19 (MSQPPPPPPLPPPPPPPEA) are compositionally biased toward pro residues. The disordered stretch occupies residues 1–40 (MSQPPPPPPLPPPPPPPEAPQTSSSLAAAATPGGLSKRRD). Positions 207–360 (LIPVHVDGDG…RNHYIPLVGI (154 aa)) constitute an OTU domain. Residue Asp215 is part of the active site. Catalysis depends on Cys218, which acts as the Nucleophile. His353 is a catalytic residue. Residue Lys407 is modified to N6-acetyllysine. Disordered regions lie at residues 724-778 (SVMQ…KIRI) and 988-1009 (EATT…GSGG). A phosphoserine mark is found at Ser746 and Ser756. The span at 754–770 (PSSAPATPTKAPYSPTT) shows a compositional bias: low complexity. Thr762 carries the phosphothreonine modification. Residues Ser767, Ser993, Ser997, and Ser1076 each carry the phosphoserine modification. 2 disordered regions span residues 1117-1177 (ASMD…TDSR) and 1189-1221 (RSKA…MDHS). Positions 1143–1156 (VSSSVRPGNLQTGL) are enriched in polar residues. Positions 1162-1173 (LTGGTENLNTET) are enriched in low complexity. Phosphoserine is present on residues Ser1197 and Ser1206. The segment covering 1198 to 1208 (MEEPEEMDSQD) has biased composition (acidic residues). Over residues 1209–1221 (AETTNTTEPMDHS) the composition is skewed to polar residues.

In terms of assembly, binds VCP and the ternary complex containing STX5A, NSFL1C and VCP. Post-translationally, phosphorylated at Ser-1206 by ATM or ATR following induction of covalent DNA-protein cross-links (DPCs). Widely expressed.

Its subcellular location is the nucleus. The protein localises to the cytoplasm. The protein resides in the endoplasmic reticulum. It is found in the golgi apparatus. It localises to the golgi stack. The enzyme catalyses Thiol-dependent hydrolysis of ester, thioester, amide, peptide and isopeptide bonds formed by the C-terminal Gly of ubiquitin (a 76-residue protein attached to proteins as an intracellular targeting signal).. Its function is as follows. Deubiquitinating enzyme involved in DNA repair and reassembly of the Golgi apparatus and the endoplasmic reticulum following mitosis. Necessary for VCP-mediated reassembly of Golgi stacks after mitosis. Plays a role in VCP-mediated formation of transitional endoplasmic reticulum (tER). Mediates dissociation of the ternary complex containing STX5A, NSFL1C and VCP. Also involved in DNA repair following phosphorylation by ATM or ATR: acts by catalyzing deubiquitination of SPRTN, thereby promoting SPRTN recruitment to chromatin and subsequent proteolytic cleavage of covalent DNA-protein cross-links (DPCs). Hydrolyzes 'Lys-11'- and 'Lys-48'-linked polyubiquitin chains. The polypeptide is Deubiquitinating protein VCPIP1 (Rattus norvegicus (Rat)).